The following is a 76-amino-acid chain: Small ribosomal subunit protein bS18 (76 aa).

Belongs to the bacterial ribosomal protein bS18 family. Part of the 30S ribosomal subunit. Forms a tight heterodimer with protein bS6.

In terms of biological role, binds as a heterodimer with protein bS6 to the central domain of the 16S rRNA, where it helps stabilize the platform of the 30S subunit. The sequence is that of Small ribosomal subunit protein bS18 from Oceanobacillus iheyensis (strain DSM 14371 / CIP 107618 / JCM 11309 / KCTC 3954 / HTE831).